We begin with the raw amino-acid sequence, 127 residues long: HTH-type transcriptional regulator ImmR (127 aa).

Over residues 1–12 (MSLGKRLKEARQ) the composition is skewed to basic and acidic residues. Positions 1–22 (MSLGKRLKEARQKAGYTQKEAA) are disordered. The region spanning 7-61 (LKEARQKAGYTQKEAAEKLNIGNNNLSNYERDYRDPDTDTLLKLSNLYNVSTDYL) is the HTH cro/C1-type domain. The segment at residues 18-37 (QKEAAEKLNIGNNNLSNYER) is a DNA-binding region (H-T-H motif).

The chain is HTH-type transcriptional regulator ImmR (immR) from Bacillus subtilis (strain 168).